The following is a 149-amino-acid chain: Protein Rv2250A (149 aa).

The protein is Protein Rv2250A of Mycobacterium tuberculosis (strain ATCC 25618 / H37Rv).